The primary structure comprises 132 residues: Fatty acid-binding protein, adipocyte (132 aa).

At cysteine 2 the chain carries N-acetylcysteine. Phosphoserine is present on serine 13. Tyrosine 20 carries the post-translational modification Phosphotyrosine; by Tyr-kinases. The Nuclear localization signal motif lies at lysine 22–lysine 32. Arginine 127 to tyrosine 129 contributes to the a fatty acid binding site.

Belongs to the calycin superfamily. Fatty-acid binding protein (FABP) family. As to quaternary structure, monomer. Homodimer. Interacts with PPARG.

It localises to the cytoplasm. Its subcellular location is the nucleus. Functionally, lipid transport protein in adipocytes. Binds both long chain fatty acids and retinoic acid. Delivers long-chain fatty acids and retinoic acid to their cognate receptors in the nucleus. This is Fatty acid-binding protein, adipocyte (Fabp4) from Mus musculus (Mouse).